Consider the following 295-residue polypeptide: Glutamyl-Q tRNA(Asp) synthetase (295 aa).

L-glutamate contacts are provided by residues 9-13 (RFAPT) and E45. Positions 12 to 22 (PTPSGFLHFGS) match the 'HIGH' region motif. The Zn(2+) site is built by C101, C103, Y115, and C119. 2 residues coordinate L-glutamate: Y172 and R190. The 'KMSKS' region motif lies at 228–232 (KLGKS). K231 lines the ATP pocket.

Belongs to the class-I aminoacyl-tRNA synthetase family. GluQ subfamily. It depends on Zn(2+) as a cofactor.

In terms of biological role, catalyzes the tRNA-independent activation of glutamate in presence of ATP and the subsequent transfer of glutamate onto a tRNA(Asp). Glutamate is transferred on the 2-amino-5-(4,5-dihydroxy-2-cyclopenten-1-yl) moiety of the queuosine in the wobble position of the QUC anticodon. The sequence is that of Glutamyl-Q tRNA(Asp) synthetase from Pseudomonas entomophila (strain L48).